The sequence spans 91 residues: Long neurotoxin OH-37 (91 aa).

The N-terminal stretch at 1–21 (MKTLLLTLVVMTIVCLDLGYS) is a signal peptide. 5 disulfide bridges follow: Cys-24–Cys-41, Cys-34–Cys-62, Cys-47–Cys-51, Cys-66–Cys-77, and Cys-78–Cys-83.

The protein belongs to the three-finger toxin family. Long-chain subfamily. Type II alpha-neurotoxin sub-subfamily. In terms of tissue distribution, expressed by the venom gland.

It localises to the secreted. Its function is as follows. Binds with high affinity to muscular (alpha-1/CHRNA1) and neuronal (alpha-7/CHRNA7) nicotinic acetylcholine receptor (nAChR) and inhibits acetylcholine from binding to the receptor, thereby impairing neuromuscular and neuronal transmission. This chain is Long neurotoxin OH-37, found in Ophiophagus hannah (King cobra).